A 273-amino-acid polypeptide reads, in one-letter code: Putative phosphoenolpyruvate synthase regulatory protein (273 aa).

153-160 (AVSRAGKT) contacts ADP.

Belongs to the pyruvate, phosphate/water dikinase regulatory protein family. PSRP subfamily.

It catalyses the reaction [pyruvate, water dikinase] + ADP = [pyruvate, water dikinase]-phosphate + AMP + H(+). The enzyme catalyses [pyruvate, water dikinase]-phosphate + phosphate + H(+) = [pyruvate, water dikinase] + diphosphate. In terms of biological role, bifunctional serine/threonine kinase and phosphorylase involved in the regulation of the phosphoenolpyruvate synthase (PEPS) by catalyzing its phosphorylation/dephosphorylation. The sequence is that of Putative phosphoenolpyruvate synthase regulatory protein from Xylella fastidiosa (strain M23).